The primary structure comprises 239 residues: Ribosomal RNA small subunit methyltransferase G (239 aa).

S-adenosyl-L-methionine-binding positions include G77, F82, 128 to 129 (AE), and R147.

This sequence belongs to the methyltransferase superfamily. RNA methyltransferase RsmG family.

It is found in the cytoplasm. In terms of biological role, specifically methylates the N7 position of guanine in position 535 of 16S rRNA. The chain is Ribosomal RNA small subunit methyltransferase G from Bacillus anthracis (strain A0248).